The following is a 362-amino-acid chain: Chorismate synthase (362 aa).

An NADP(+)-binding site is contributed by R47. FMN contacts are provided by residues 124–126, G286, 301–305, and R327; these read RSS and KPTAT.

The protein belongs to the chorismate synthase family. As to quaternary structure, homotetramer. It depends on FMNH2 as a cofactor.

The catalysed reaction is 5-O-(1-carboxyvinyl)-3-phosphoshikimate = chorismate + phosphate. It participates in metabolic intermediate biosynthesis; chorismate biosynthesis; chorismate from D-erythrose 4-phosphate and phosphoenolpyruvate: step 7/7. Catalyzes the anti-1,4-elimination of the C-3 phosphate and the C-6 proR hydrogen from 5-enolpyruvylshikimate-3-phosphate (EPSP) to yield chorismate, which is the branch point compound that serves as the starting substrate for the three terminal pathways of aromatic amino acid biosynthesis. This reaction introduces a second double bond into the aromatic ring system. The chain is Chorismate synthase from Synechococcus sp. (strain ATCC 27144 / PCC 6301 / SAUG 1402/1) (Anacystis nidulans).